Reading from the N-terminus, the 230-residue chain is Carbohydrate deacetylase (230 aa).

Residues His59 and His123 each contribute to the Mg(2+) site.

Belongs to the YdjC deacetylase family. As to quaternary structure, homodimer. Mg(2+) serves as cofactor.

Probably catalyzes the deacetylation of acetylated carbohydrates an important step in the degradation of oligosaccharides. This chain is Carbohydrate deacetylase, found in Oceanobacillus iheyensis (strain DSM 14371 / CIP 107618 / JCM 11309 / KCTC 3954 / HTE831).